The following is a 446-amino-acid chain: Putative RNA-ligase (446 aa).

It belongs to the asfivirus M448R family.

Its subcellular location is the virion. This chain is Putative RNA-ligase, found in African swine fever virus (isolate Tick/Malawi/Lil 20-1/1983) (ASFV).